The primary structure comprises 357 residues: S-adenosylmethionine:tRNA ribosyltransferase-isomerase (357 aa).

This sequence belongs to the QueA family. As to quaternary structure, monomer.

Its subcellular location is the cytoplasm. The enzyme catalyses 7-aminomethyl-7-carbaguanosine(34) in tRNA + S-adenosyl-L-methionine = epoxyqueuosine(34) in tRNA + adenine + L-methionine + 2 H(+). The protein operates within tRNA modification; tRNA-queuosine biosynthesis. Functionally, transfers and isomerizes the ribose moiety from AdoMet to the 7-aminomethyl group of 7-deazaguanine (preQ1-tRNA) to give epoxyqueuosine (oQ-tRNA). The sequence is that of S-adenosylmethionine:tRNA ribosyltransferase-isomerase from Proteus mirabilis (strain HI4320).